Here is a 348-residue protein sequence, read N- to C-terminus: Killer cell immunoglobulin-like receptor 2DL2 (348 aa).

Residues 1–21 (MSLMVVSMACVGFFLLQGAWP) form the signal peptide. Topologically, residues 22–245 (HEGVHRKPSL…SKTGNPRHLH (224 aa)) are extracellular. 2 consecutive Ig-like C2-type domains span residues 42–107 (EETV…VTHS) and 142–205 (GESV…FRDS). 2 cysteine pairs are disulfide-bonded: cysteine 49/cysteine 100 and cysteine 149/cysteine 198. N-linked (GlcNAc...) asparagine glycosylation is found at asparagine 84, asparagine 178, and asparagine 211. Residues 246–264 (ILIGTSVVIILFILLFFLL) traverse the membrane as a helical segment. Over 265–348 (HRWCSNKKNA…ESRSKVVSCP (84 aa)) the chain is Cytoplasmic.

Belongs to the immunoglobulin superfamily.

The protein resides in the cell membrane. Its function is as follows. Receptor on natural killer (NK) cells for HLA-Cw1, 3, 7, and 8 allotypes. Inhibits the activity of NK cells thus preventing cell lysis. The protein is Killer cell immunoglobulin-like receptor 2DL2 of Homo sapiens (Human).